The following is a 76-amino-acid chain: Centromere protein W (76 aa).

Belongs to the CENP-W/WIP1 family. In terms of assembly, heterodimer with CENPT; this dimer coassembles with CENPS-CENPX heterodimers at centromeres to form the tetrameric CENP-T-W-S-X complex, which is a subcomplex of the large constitutive centromere-associated network (CCAN, also known as the interphase centromere complex or ICEN). Interacts with NPM1.

Its subcellular location is the nucleus. It localises to the chromosome. The protein resides in the centromere. The protein localises to the kinetochore. Component of the CENPA-NAC (nucleosome-associated) complex, a complex that plays a central role in assembly of kinetochore proteins, mitotic progression and chromosome segregation. The CENPA-NAC complex recruits the CENPA-CAD (nucleosome distal) complex and may be involved in incorporation of newly synthesized CENPA into centromeres. Part of a nucleosome-associated complex that binds specifically to histone H3-containing nucleosomes at the centromere, as opposed to nucleosomes containing CENPA. Component of the heterotetrameric CENP-T-W-S-X complex that binds and supercoils DNA, and plays an important role in kinetochore assembly. CENPW has a fundamental role in kinetochore assembly and function. It is one of the inner kinetochore proteins, with most further proteins binding downstream. Required for normal chromosome organization and normal progress through mitosis. The protein is Centromere protein W (CENPW) of Gallus gallus (Chicken).